Reading from the N-terminus, the 179-residue chain is Large ribosomal subunit protein uL5 (179 aa).

This sequence belongs to the universal ribosomal protein uL5 family. In terms of assembly, part of the 50S ribosomal subunit; part of the 5S rRNA/L5/L18/L25 subcomplex. Contacts the 5S rRNA and the P site tRNA. Forms a bridge to the 30S subunit in the 70S ribosome.

This is one of the proteins that bind and probably mediate the attachment of the 5S RNA into the large ribosomal subunit, where it forms part of the central protuberance. In the 70S ribosome it contacts protein S13 of the 30S subunit (bridge B1b), connecting the 2 subunits; this bridge is implicated in subunit movement. Contacts the P site tRNA; the 5S rRNA and some of its associated proteins might help stabilize positioning of ribosome-bound tRNAs. The sequence is that of Large ribosomal subunit protein uL5 from Rickettsia akari (strain Hartford).